The sequence spans 143 residues: Nucleoside diphosphate kinase (143 aa).

6 residues coordinate ATP: lysine 11, phenylalanine 59, arginine 87, threonine 93, arginine 104, and asparagine 114. Histidine 117 (pros-phosphohistidine intermediate) is an active-site residue.

This sequence belongs to the NDK family. In terms of assembly, homotetramer. Requires Mg(2+) as cofactor.

Its subcellular location is the cytoplasm. It carries out the reaction a 2'-deoxyribonucleoside 5'-diphosphate + ATP = a 2'-deoxyribonucleoside 5'-triphosphate + ADP. The enzyme catalyses a ribonucleoside 5'-diphosphate + ATP = a ribonucleoside 5'-triphosphate + ADP. Major role in the synthesis of nucleoside triphosphates other than ATP. The ATP gamma phosphate is transferred to the NDP beta phosphate via a ping-pong mechanism, using a phosphorylated active-site intermediate. The protein is Nucleoside diphosphate kinase of Cronobacter sakazakii (strain ATCC BAA-894) (Enterobacter sakazakii).